A 445-amino-acid chain; its full sequence is Trigger factor (445 aa).

A PPIase FKBP-type domain is found at 162 to 247; that stretch reads GDQVTIDAIG…IKAVHTAEPT (86 aa).

The protein belongs to the FKBP-type PPIase family. Tig subfamily.

The protein localises to the cytoplasm. The enzyme catalyses [protein]-peptidylproline (omega=180) = [protein]-peptidylproline (omega=0). Involved in protein export. Acts as a chaperone by maintaining the newly synthesized protein in an open conformation. Functions as a peptidyl-prolyl cis-trans isomerase. The protein is Trigger factor (tig) of Rickettsia prowazekii (strain Madrid E).